A 78-amino-acid polypeptide reads, in one-letter code: Acyl carrier protein (78 aa).

The 76-residue stretch at 2-77 folds into the Carrier domain; sequence STIEERVKKI…EAIDYINAHA (76 aa). Ser37 bears the O-(pantetheine 4'-phosphoryl)serine mark.

Belongs to the acyl carrier protein (ACP) family. Post-translationally, 4'-phosphopantetheine is transferred from CoA to a specific serine of apo-ACP by AcpS. This modification is essential for activity because fatty acids are bound in thioester linkage to the sulfhydryl of the prosthetic group.

Its subcellular location is the cytoplasm. Its pathway is lipid metabolism; fatty acid biosynthesis. Carrier of the growing fatty acid chain in fatty acid biosynthesis. This chain is Acyl carrier protein, found in Stutzerimonas stutzeri (strain A1501) (Pseudomonas stutzeri).